Here is a 391-residue protein sequence, read N- to C-terminus: Dual-specificity RNA methyltransferase RlmN (391 aa).

The active-site Proton acceptor is the Glu112. Residues 118–368 (ESDRGTLCIS…VRTPRGRDIL (251 aa)) form the Radical SAM core domain. Cys125 and Cys371 form a disulfide bridge. [4Fe-4S] cluster-binding residues include Cys132, Cys136, and Cys139. Residues 197-198 (GE), Ser229, 251-253 (SLH), and Asn328 each bind S-adenosyl-L-methionine. Cys371 (S-methylcysteine intermediate) is an active-site residue.

This sequence belongs to the radical SAM superfamily. RlmN family. The cofactor is [4Fe-4S] cluster.

Its subcellular location is the cytoplasm. The enzyme catalyses adenosine(2503) in 23S rRNA + 2 reduced [2Fe-2S]-[ferredoxin] + 2 S-adenosyl-L-methionine = 2-methyladenosine(2503) in 23S rRNA + 5'-deoxyadenosine + L-methionine + 2 oxidized [2Fe-2S]-[ferredoxin] + S-adenosyl-L-homocysteine. The catalysed reaction is adenosine(37) in tRNA + 2 reduced [2Fe-2S]-[ferredoxin] + 2 S-adenosyl-L-methionine = 2-methyladenosine(37) in tRNA + 5'-deoxyadenosine + L-methionine + 2 oxidized [2Fe-2S]-[ferredoxin] + S-adenosyl-L-homocysteine. In terms of biological role, specifically methylates position 2 of adenine 2503 in 23S rRNA and position 2 of adenine 37 in tRNAs. m2A2503 modification seems to play a crucial role in the proofreading step occurring at the peptidyl transferase center and thus would serve to optimize ribosomal fidelity. In Beijerinckia indica subsp. indica (strain ATCC 9039 / DSM 1715 / NCIMB 8712), this protein is Dual-specificity RNA methyltransferase RlmN.